Here is a 294-residue protein sequence, read N- to C-terminus: Phosphoribosylaminoimidazole-succinocarboxamide synthase (294 aa).

It belongs to the SAICAR synthetase family.

The catalysed reaction is 5-amino-1-(5-phospho-D-ribosyl)imidazole-4-carboxylate + L-aspartate + ATP = (2S)-2-[5-amino-1-(5-phospho-beta-D-ribosyl)imidazole-4-carboxamido]succinate + ADP + phosphate + 2 H(+). It participates in purine metabolism; IMP biosynthesis via de novo pathway; 5-amino-1-(5-phospho-D-ribosyl)imidazole-4-carboxamide from 5-amino-1-(5-phospho-D-ribosyl)imidazole-4-carboxylate: step 1/2. This Rhodococcus opacus (strain B4) protein is Phosphoribosylaminoimidazole-succinocarboxamide synthase.